The following is a 216-amino-acid chain: Ribonuclease HII (216 aa).

The RNase H type-2 domain occupies 33–216 (WPVAGADEAG…RMSFRPFRQL (184 aa)). A divalent metal cation contacts are provided by Asp-39, Glu-40, and Asp-130.

Belongs to the RNase HII family. The cofactor is Mn(2+). It depends on Mg(2+) as a cofactor.

It is found in the cytoplasm. It catalyses the reaction Endonucleolytic cleavage to 5'-phosphomonoester.. Functionally, endonuclease that specifically degrades the RNA of RNA-DNA hybrids. The chain is Ribonuclease HII from Sinorhizobium medicae (strain WSM419) (Ensifer medicae).